Consider the following 162-residue polypeptide: Transcription elongation factor GreA (162 aa).

Positions 45–65 form a coiled coil; the sequence is NAEYHAAKERQLFIEARINEL.

The protein belongs to the GreA/GreB family.

Its function is as follows. Necessary for efficient RNA polymerase transcription elongation past template-encoded arresting sites. The arresting sites in DNA have the property of trapping a certain fraction of elongating RNA polymerases that pass through, resulting in locked ternary complexes. Cleavage of the nascent transcript by cleavage factors such as GreA or GreB allows the resumption of elongation from the new 3'terminus. GreA releases sequences of 2 to 3 nucleotides. The protein is Transcription elongation factor GreA of Wolinella succinogenes (strain ATCC 29543 / DSM 1740 / CCUG 13145 / JCM 31913 / LMG 7466 / NCTC 11488 / FDC 602W) (Vibrio succinogenes).